Consider the following 574-residue polypeptide: Transmembrane glycoprotein NMB (574 aa).

The first 22 residues, 1–22 (MESLCGVLGFLLLAAGLPLQAA), serve as a signal peptide directing secretion. The Extracellular segment spans residues 23–502 (KRFRDVLGHE…DPDSPLRAVN (480 aa)). 9 N-linked (GlcNAc...) asparagine glycosylation sites follow: N93, N134, N200, N249, N275, N296, N300, N306, and N312. The PKD domain occupies 250–338 (LSDEIFLRDL…STPPPPSTPP (89 aa)). The disordered stretch occupies residues 320 to 353 (PGPCPPPSPSTPPPPSTPPSPPPSPLPTLSTPSP). Residues 321-345 (GPCPPPSPSTPPPPSTPPSPPPSPL) show a composition bias toward pro residues. N-linked (GlcNAc...) asparagine glycans are attached at residues N463 and N471. Residues 503–523 (GVLISIGCLAVLVTMVTILLY) form a helical membrane-spanning segment. At 524 to 574 (KKHKAYKPIGNCPRNTVKGKGLSVLLSHAKAPFFRGDQEKDPLLQDKPRTL) the chain is on the cytoplasmic side. S546 carries the phosphoserine modification. The Cell attachment site motif lies at 558 to 560 (RGD).

This sequence belongs to the PMEL/NMB family. In terms of tissue distribution, may be up-regulated in bone metastatic breast cancer cells.

It localises to the cell membrane. Its subcellular location is the melanosome membrane. The protein resides in the early endosome membrane. In terms of biological role, could be a melanogenic enzyme. The sequence is that of Transmembrane glycoprotein NMB (Gpnmb) from Mus musculus (Mouse).